A 492-amino-acid chain; its full sequence is Bifunctional protein GlmU (492 aa).

The segment at 1 to 241 is pyrophosphorylase; it reads MTFRGDTAVV…SALVAGVNDR (241 aa). UDP-N-acetyl-alpha-D-glucosamine is bound by residues 12–15, Lys26, Gln83, and 88–89; these read LAAG and GT. Asp114 contributes to the Mg(2+) binding site. Positions 151, 166, 181, and 239 each coordinate UDP-N-acetyl-alpha-D-glucosamine. Asn239 is a Mg(2+) binding site. Positions 242–262 are linker; it reads VQLAQLGAELNRRIVAAHQMA. The segment at 263-492 is N-acetyltransferase; it reads GVTVIDPATT…TPPPDADHPP (230 aa). The UDP-N-acetyl-alpha-D-glucosamine site is built by Arg344 and Lys362. His374 acts as the Proton acceptor in catalysis. UDP-N-acetyl-alpha-D-glucosamine is bound by residues Tyr377 and Asn388. Acetyl-CoA contacts are provided by residues Ala391, 397-398, and Ala434; that span reads NY. Residues 443-492 form a disordered region; that stretch reads PPGALAVSGGPQRNIEDWVQQKRPGTPSAEAARKASAEQSTPPPDADHPP.

The protein in the N-terminal section; belongs to the N-acetylglucosamine-1-phosphate uridyltransferase family. This sequence in the C-terminal section; belongs to the transferase hexapeptide repeat family. In terms of assembly, homotrimer. It depends on Mg(2+) as a cofactor.

The protein localises to the cytoplasm. It catalyses the reaction alpha-D-glucosamine 1-phosphate + acetyl-CoA = N-acetyl-alpha-D-glucosamine 1-phosphate + CoA + H(+). The catalysed reaction is N-acetyl-alpha-D-glucosamine 1-phosphate + UTP + H(+) = UDP-N-acetyl-alpha-D-glucosamine + diphosphate. Its pathway is nucleotide-sugar biosynthesis; UDP-N-acetyl-alpha-D-glucosamine biosynthesis; N-acetyl-alpha-D-glucosamine 1-phosphate from alpha-D-glucosamine 6-phosphate (route II): step 2/2. The protein operates within nucleotide-sugar biosynthesis; UDP-N-acetyl-alpha-D-glucosamine biosynthesis; UDP-N-acetyl-alpha-D-glucosamine from N-acetyl-alpha-D-glucosamine 1-phosphate: step 1/1. It participates in bacterial outer membrane biogenesis; LPS lipid A biosynthesis. Its function is as follows. Catalyzes the last two sequential reactions in the de novo biosynthetic pathway for UDP-N-acetylglucosamine (UDP-GlcNAc). The C-terminal domain catalyzes the transfer of acetyl group from acetyl coenzyme A to glucosamine-1-phosphate (GlcN-1-P) to produce N-acetylglucosamine-1-phosphate (GlcNAc-1-P), which is converted into UDP-GlcNAc by the transfer of uridine 5-monophosphate (from uridine 5-triphosphate), a reaction catalyzed by the N-terminal domain. This Mycobacterium ulcerans (strain Agy99) protein is Bifunctional protein GlmU.